A 530-amino-acid chain; its full sequence is MAAPAACTRFSDNYDIKEELGKGAFSIVKRCVQKSTGFEFAAKIINTKKLTARDFQKLEREARICRKLHHPNIVRLHDSIQEENYHYLVFDLVTGGELFEDIVAREFYSEADASHCIQQILESVNHCHQNGVVHRDLKPENLLLASKAKGAAVKLADFGLAIEVQGDHQAWFGFAGTPGYLSPEVLKKEPYGKSVDIWACGVILYILLVGYPPFWDEDQHRLYSQIKAGAYDYPSPEWDTVTPEAKNLINQMLTVNPNKRITAAEALKHPWICQRERVASVVHRQETVDCLKKFNARRKLKGAILTTMLATRNFSSRSMITKKGEGSQVKESTDSSSTTLEDDDIKEDKKGTVDRSTTVVSKEPEDIRILCPAKTYQQNIGNSQCSSARRQEIIKITEQLIEAINSGDFDGYTKICDPHLTAFEPEALGNLVEGIDFHKFYFENVLGKNCKAINTTILNPHVHLLGEEAACIAYVRLTQYIDKQGHAHTHQSEETRVWHKRDNKWQNVHFHRSASAKISGATTFDFIPQK.

The Protein kinase domain occupies 12-272; it reads DNYDIKEELG…AAEALKHPWI (261 aa). Residues 20–28 and lysine 43 each bind ATP; that span reads LGKGAFSIV. The active-site Proton acceptor is the aspartate 136. Threonine 287 carries the post-translational modification Phosphothreonine; by autocatalysis. The calmodulin-binding stretch occupies residues 291 to 301; the sequence is LKKFNARRKLK. Phosphothreonine; by autocatalysis is present on residues threonine 306 and threonine 307. The disordered stretch occupies residues 320-358; sequence ITKKGEGSQVKESTDSSSTTLEDDDIKEDKKGTVDRSTT. Serine 327 carries the phosphoserine modification.

It belongs to the protein kinase superfamily. CAMK Ser/Thr protein kinase family. CaMK subfamily. Interacts with CASK. Autophosphorylation at Thr-287 is independent of autophosphorylation at Thr-306 and Thr-307. Expressed at a high level in the central nervous system during the late embryonic stage. In adults, expression is more abundant in the head than in the body.

It carries out the reaction L-seryl-[protein] + ATP = O-phospho-L-seryl-[protein] + ADP + H(+). The enzyme catalyses L-threonyl-[protein] + ATP = O-phospho-L-threonyl-[protein] + ADP + H(+). With respect to regulation, CASK plays a role in regulation of CaMKII autophosphorylation. When complexed with CASK and in the presence Ca[2+]/CaM, autophosphorylation of Thr-287 causes constitutive activation of the kinase. In the absence of Ca[2+]/CaM, autophosphorylation of Thr-306 causes inactivation of the kinase. A key regulator of plasticity in synaptic physiology and behavior, alterations in its activity produce pleiotrophic effects that involve synaptic transmission and development as well as various aspects of behavior. Directly modulates eag potassium channels. The polypeptide is Calcium/calmodulin-dependent protein kinase type II alpha chain (CaMKII) (Drosophila melanogaster (Fruit fly)).